A 118-amino-acid chain; its full sequence is Large ribosomal subunit protein bL20 (118 aa).

The protein belongs to the bacterial ribosomal protein bL20 family.

In terms of biological role, binds directly to 23S ribosomal RNA and is necessary for the in vitro assembly process of the 50S ribosomal subunit. It is not involved in the protein synthesizing functions of that subunit. The chain is Large ribosomal subunit protein bL20 from Shigella flexneri serotype 5b (strain 8401).